A 540-amino-acid chain; its full sequence is Peptide chain release factor 3 (540 aa).

Residues glutamate 14–glycine 283 form the tr-type G domain. GTP-binding positions include serine 23–threonine 30, aspartate 91–histidine 95, and asparagine 145–aspartate 148.

This sequence belongs to the TRAFAC class translation factor GTPase superfamily. Classic translation factor GTPase family. PrfC subfamily.

The protein localises to the cytoplasm. Increases the formation of ribosomal termination complexes and stimulates activities of RF-1 and RF-2. It binds guanine nucleotides and has strong preference for UGA stop codons. It may interact directly with the ribosome. The stimulation of RF-1 and RF-2 is significantly reduced by GTP and GDP, but not by GMP. In Trichormus variabilis (strain ATCC 29413 / PCC 7937) (Anabaena variabilis), this protein is Peptide chain release factor 3.